The primary structure comprises 285 residues: CCR4-NOT transcription complex subunit 7 (285 aa).

Asp40, Glu42, Asp161, Asp230, and Glu278 together coordinate a divalent metal cation.

This sequence belongs to the CAF1 family. Component of the CCR4-NOT complex; distinct complexes seem to exist that differ in the participation of probably mutually exclusive catalytic subunits; the complex contains two deadenylase subunits, CNOT6 or CNOT6L, and CNOT7 or CNOT8. In the complex, interacts directly with CNOT1. Interacts with AGO2. Interacts with TOB1; recruited by TOB1 to a ternary complex with CPEB3 which is required for mRNA deadenylation and decay. Interacts with BTG1. Interacts with BTG2. Interacts with NANOS2. Interacts with ZFP36, ZFP36L1 and ZFP36L2; these interactions are inhibited in response to phorbol 12-myristate 13-acetate (PMA) treatment in a p38 MAPK-dependent manner. Interacts with BTG4. Interacts with EIF4E; this interaction is increased by CNOT7 interaction with BTG4. Mn(2+) is required as a cofactor. Requires Mg(2+) as cofactor. It depends on Co(2+) as a cofactor.

The protein resides in the nucleus. It is found in the cytoplasm. It localises to the P-body. The protein localises to the cytoplasmic ribonucleoprotein granule. The enzyme catalyses Exonucleolytic cleavage of poly(A) to 5'-AMP.. Functionally, has 3'-5' poly(A) exoribonuclease activity for synthetic poly(A) RNA substrate. Its function seems to be partially redundant with that of CNOT8. Catalytic component of the CCR4-NOT complex which is one of the major cellular mRNA deadenylases and is linked to various cellular processes including bulk mRNA degradation, miRNA-mediated repression, translational repression during translational initiation and general transcription regulation. During miRNA-mediated repression the complex also seems to act as translational repressor during translational initiation. Additional complex functions may be a consequence of its influence on mRNA expression. Required for miRNA-mediated mRNA deadenylation. Associates with members of the BTG family such as TOB1 and BTG2 and is required for their anti-proliferative activity. The polypeptide is CCR4-NOT transcription complex subunit 7 (CNOT7) (Bos taurus (Bovine)).